The chain runs to 515 residues: mRNA export factor ICP27 homolog (515 aa).

The Zn(2+) site is built by cysteine 230, histidine 335, cysteine 337, and cysteine 342. A CHC2-type zinc finger spans residues 230-342; that stretch reads CVFNDNGHGD…SNHKCDDVSC (113 aa). Residues 398 to 408 show a composition bias toward polar residues; sequence YSTNHDLPQTS. The tract at residues 398 to 422 is disordered; the sequence is YSTNHDLPQTSHRSHKNHGTPKVKS. Residues 409–422 show a composition bias toward basic residues; the sequence is HRSHKNHGTPKVKS.

It belongs to the HHV-1 ICP27 protein family.

It localises to the virion tegument. Its subcellular location is the virion. The protein resides in the host nucleus. It is found in the host cytoplasm. Immediate early (EI) protein that plays many roles during productive infection including regulation of viral gene expression and nuclear export of intronless viral RNAs. This is mRNA export factor ICP27 homolog from Human herpesvirus 6A (strain Uganda-1102) (HHV-6 variant A).